Here is a 410-residue protein sequence, read N- to C-terminus: Sensor histidine kinase GlnK (410 aa).

At 1–15 (MLITVPLAGELKFYP) the chain is on the extracellular side. Residues 16 to 36 (LNEEFRVSFGAPVFFFFLSLL) form a helical membrane-spanning segment. Residues 37-38 (RH) lie on the Cytoplasmic side of the membrane. The chain crosses the membrane as a helical span at residues 39–59 (VPAVLPGFLTGAAVFIFRVFL). Residues 60–71 (ELWGGGHNGLTP) lie on the Extracellular side of the membrane. Residues 72 to 92 (ILYDQASGFFFYMTYACLFSI) form a helical membrane-spanning segment. The Cytoplasmic segment spans residues 93–102 (LKANRFRERP). Residues 103–123 (IMLGFIGFMIEVVSDCVELTV) traverse the membrane as a helical segment. At 124 to 139 (QFLIFHTVVTPEKITD) the chain is on the extracellular side. A helical membrane pass occupies residues 140-160 (IAVIAISHTFIVMSFYSVLKL). At 161-410 (YETQSREKQT…LPVRHLIQKG (250 aa)) the chain is on the cytoplasmic side. The region spanning 189–405 (VHLKKTLKTT…VFAIRLPVRH (217 aa)) is the Histidine kinase domain. His-190 carries the post-translational modification Phosphohistidine; by autocatalysis.

In terms of assembly, homotrimer. Under poor nitrogen source such as nitrate, the complex between GlnK and AmtB, which are the transmembrane ammonium transporter and its cognate regulator, respectively, interacts with TnrA. GlnK-ATP complex are not able to bind TnrA.

It is found in the cell membrane. The enzyme catalyses ATP + protein L-histidine = ADP + protein N-phospho-L-histidine.. Member of the two-component regulatory system GlnK/GlnL that positively regulates the expression of the glsA-glnT operon in response to glutamine. It seems that autophosphorylated GlnK transfers a phosphoryl group to GlnL, which positively regulates the expression of the glsA-glnT operon. Interaction between GlnK-AmtB complex and TnrA protects TnrA from proteolytic degradation. This is Sensor histidine kinase GlnK from Bacillus subtilis (strain 168).